Consider the following 155-residue polypeptide: MSIKTIEGTLEATNLKFALVVSRFNDFIGQKLVEGAVDCIVRHGGSEENIAVYKCPGAFELPAVAKKAALTGRYDAVITLGAIIRGSTSHYDVIAAEATKGVAQAGLETMIPITFGVLTTENLEQAIERAGTKAGNKGFDAALAAIEMVNLYRQV.

5-amino-6-(D-ribitylamino)uracil contacts are provided by residues Phe-24, 58 to 60 (AFE), and 82 to 84 (AII). (2S)-2-hydroxy-3-oxobutyl phosphate is bound at residue 87–88 (ST). His-90 acts as the Proton donor in catalysis. Phe-115 contributes to the 5-amino-6-(D-ribitylamino)uracil binding site. Arg-129 contacts (2S)-2-hydroxy-3-oxobutyl phosphate.

The protein belongs to the DMRL synthase family.

The enzyme catalyses (2S)-2-hydroxy-3-oxobutyl phosphate + 5-amino-6-(D-ribitylamino)uracil = 6,7-dimethyl-8-(1-D-ribityl)lumazine + phosphate + 2 H2O + H(+). Its pathway is cofactor biosynthesis; riboflavin biosynthesis; riboflavin from 2-hydroxy-3-oxobutyl phosphate and 5-amino-6-(D-ribitylamino)uracil: step 1/2. Its function is as follows. Catalyzes the formation of 6,7-dimethyl-8-ribityllumazine by condensation of 5-amino-6-(D-ribitylamino)uracil with 3,4-dihydroxy-2-butanone 4-phosphate. This is the penultimate step in the biosynthesis of riboflavin. The protein is 6,7-dimethyl-8-ribityllumazine synthase of Chlorobium phaeobacteroides (strain BS1).